The primary structure comprises 664 residues: Transmembrane protein 201 (664 aa).

The residue at position 1 (Met-1) is an N-acetylmethionine. Residues 1-214 lie on the Nuclear side of the membrane; it reads MEGVSALLAS…SSSAVKAPFQ (214 aa). A helical transmembrane segment spans residues 215–235; that stretch reads VILLRALAFLACAFLLFTTLY. The Perinuclear space portion of the chain corresponds to 236 to 297; sequence GPSEPFTPGA…EAWAFGQSHQ (62 aa). Residues 245-261 are compositionally biased toward low complexity; that stretch reads AALPPALPPGGNSSAAS. The segment at 245-264 is disordered; sequence AALPPALPPGGNSSAASDNT. Residues 298–318 form a helical membrane-spanning segment; sequence TSIVAVGLLTCLLAMLLAGRI. At 319-322 the chain is on the nuclear side; it reads RLRR. The chain crosses the membrane as a helical span at residues 323–343; it reads IDAFSTCLWALLLGLHLAEHY. Residues 344–356 are Perinuclear space-facing; sequence LQAASPGWLDTLK. The chain crosses the membrane as a helical span at residues 357–374; that stretch reads FSTTSLCCLVGFTAAVAT. Residues 375–642 lie on the Nuclear side of the membrane; it reads RKSTGPRRFR…ARVSPSLVRG (268 aa). 7 positions are modified to phosphoserine: Ser-441, Ser-444, Ser-450, Ser-454, Ser-466, Ser-477, and Ser-480. The interval 502–522 is disordered; the sequence is PLPSPAPSVASSVASSSGSLR. Residues 508–520 show a composition bias toward low complexity; that stretch reads PSVASSVASSSGS. Phosphoserine is present on Ser-529. The tract at residues 544–629 is disordered; it reads SSPGEAPNTP…TTKGCSEETT (86 aa). Composition is skewed to basic and acidic residues over residues 578-587 and 595-608; these read HTRDTKHTME and DSARSSHSIKKEDE. The segment covering 610–628 has biased composition (polar residues); that stretch reads SQSSTCVVDTTTKGCSEET. A helical transmembrane segment spans residues 643–663; that stretch reads LLAVSLAVNALFTSAYLYQSL. Arg-664 is a topological domain (perinuclear space).

This sequence belongs to the TMEM201 family. As to quaternary structure, isoform 2 interacts with EMD. Isoform 3 interacts with SUN2 and LMNA. May bind to Ran GTPase; has a greater affinity for Ran-GTP over Ran-GDP.

It localises to the nucleus inner membrane. Critical regulator of angiogenesis and endothelial cell (EC) migration. Promotes the migration of endothelial cells, which is essential for angiogenesis. Interacts with the linker of nucleoskeleton and cytoskeleton (LINC) complex, which plays a vital role in connecting the cell's cytoskeleton to the nuclear envelope. This interaction is essential for maintaining cellular structure and facilitating the movement of endothelial cells, which is critical for proper vascular development. Involved in nuclear movement during fibroblast polarization and migration. May recruit Ran GTPase to the nuclear periphery. In terms of biological role, may define a distinct membrane domain in the vicinity of the mitotic spindle. Involved in the organization of the nuclear envelope implicating EMD, SUN1 and A-type lamina. Functionally, proposed to be involved in actin-dependent nuclear movement; via SUN2 associates with transmembrane actin-associated nuclear (TAN) lines which are bound to F-actin cables and couple the nucleus to retrograde actin flow. This Mus musculus (Mouse) protein is Transmembrane protein 201 (Tmem201).